Reading from the N-terminus, the 156-residue chain is MKFNDVYNKHQKIIHYLLKKYNISYNYDEYYQLLLIKMWQLSQIYKPSSKQSLSSFLFTRLNFYLIDLFRQQNQLKDVILCENNSPTLTEQPTYFNEHDLRLQDIFKLLNQRERLWLKLYLEGYKQFEIAEIMSLSLSTIKLIKMSVKRKCQHNFN.

The short motif at 29–44 is the Polymerase core binding element; that stretch reads EYYQLLLIKMWQLSQI. Residues 126–145 constitute a DNA-binding region (H-T-H motif); that stretch reads QFEIAEIMSLSLSTIKLIKM.

This sequence belongs to the sigma-70 factor family.

Sigma factors are initiation factors that promote the attachment of RNA polymerase to specific initiation sites and are then released. Sigma-S contributes to the protection against external stress, thus playing a role in cellular fitness and survival. The sequence is that of RNA polymerase sigma factor SigS (sigS) from Staphylococcus aureus (strain NCTC 8325 / PS 47).